The following is a 316-amino-acid chain: 4-hydroxyphenylacetate decarboxylase activating enzyme (316 aa).

The region spanning 20–307 (HDGPGCRTTV…QDIFLDNGIA (288 aa)) is the Radical SAM core domain. [4Fe-4S] cluster contacts are provided by cysteine 34, cysteine 38, cysteine 41, cysteine 60, cysteine 66, cysteine 69, and cysteine 105. 40–42 (WCA) serves as a coordination point for S-adenosyl-L-methionine. Positions 84–115 (NKPVIDWNICKDCESFECVNSCYYNAFKLCAK) constitute a 4Fe-4S ferredoxin-type domain. S-adenosyl-L-methionine is bound by residues glycine 144, 193 to 195 (DIK), and histidine 267.

This sequence belongs to the organic radical-activating enzymes family. In terms of assembly, monomer. It depends on [4Fe-4S] cluster as a cofactor.

The catalysed reaction is glycyl-[protein] + reduced [flavodoxin] + S-adenosyl-L-methionine = glycin-2-yl radical-[protein] + semiquinone [flavodoxin] + 5'-deoxyadenosine + L-methionine + H(+). Its function is as follows. Catalyzes activation of 4-hydroxyphenylacetate decarboxylase under anaerobic conditions by generation of an organic free radical on a glycine residue, via a homolytic cleavage of S-adenosyl-L-methionine (SAM). This is 4-hydroxyphenylacetate decarboxylase activating enzyme from Clostridioides difficile (Peptoclostridium difficile).